The primary structure comprises 2286 residues: DNA polymerase epsilon catalytic subunit A (2286 aa).

The interval 1–30 is disordered; that stretch reads MSLRSGGRRRADPGADGEASRDDGATSSVS. The segment covering 9 to 24 has biased composition (basic and acidic residues); that stretch reads RRADPGADGEASRDDG. Ser1184, Ser1297, Ser1317, and Ser1940 each carry phosphoserine. Positions 1939–1969 are disordered; that stretch reads DSQKAGGAEDEQENEDDEEERDGEEEEEAEE. The segment covering 1946-1969 has biased composition (acidic residues); the sequence is AEDEQENEDDEEERDGEEEEEAEE. Zn(2+) contacts are provided by Cys2158, Cys2161, Cys2187, and Cys2190. The CysA-type zinc finger occupies 2158-2190; that stretch reads CRSCNFCRDLDLCKDSSFSEDGAVLPQWLCSNC. 4 residues coordinate [4Fe-4S] cluster: Cys2221, Cys2224, Cys2236, and Cys2238. The CysB motif signature appears at 2221–2238; that stretch reads CLKCRGVKETSMPVYCSC.

It belongs to the DNA polymerase type-B family. Component of the DNA polymerase epsilon complex consisting of four subunits: the catalytic subunit POLE and the accessory subunits POLE2, POLE3 and POLE4. Interacts with RAD17 and TOPBP1.

Its subcellular location is the nucleus. The catalysed reaction is DNA(n) + a 2'-deoxyribonucleoside 5'-triphosphate = DNA(n+1) + diphosphate. In terms of biological role, catalytic component of the DNA polymerase epsilon complex. Participates in chromosomal DNA replication. Required during synthesis of the leading DNA strands at the replication fork, binds at/or near replication origins and moves along DNA with the replication fork. Has 3'-5' proofreading exonuclease activity that corrects errors arising during DNA replication. Involved in DNA synthesis during DNA repair. Along with DNA polymerase POLD1 and DNA polymerase POLK, has a role in excision repair (NER) synthesis following UV irradiation. The protein is DNA polymerase epsilon catalytic subunit A of Homo sapiens (Human).